We begin with the raw amino-acid sequence, 525 residues long: uncharacterized protein (525 aa).

A signal peptide spans Met-1 to Ala-21. Over Ala-22–Arg-448 the chain is Extracellular. Residues Lys-242–Thr-264 form a disordered region. A helical membrane pass occupies residues Ile-449–Tyr-469. Residues Arg-470–Glu-525 lie on the Cytoplasmic side of the membrane.

Its subcellular location is the membrane. This is an uncharacterized protein from Saccharomyces cerevisiae (strain ATCC 204508 / S288c) (Baker's yeast).